Here is a 355-residue protein sequence, read N- to C-terminus: N6-Methyl-AMP deaminase (355 aa).

Positions 24 and 26 each coordinate Zn(2+). Residues His-26, Asn-28, His-74, Ser-106–Arg-109, Asp-148, and Gly-181 contribute to the N(6)-methyl-AMP site. Residue His-208 coordinates Zn(2+). N(6)-methyl-AMP contacts are provided by Glu-211, Asp-293, and Asp-294. Catalysis depends on Glu-211, which acts as the Proton donor. Asp-293 provides a ligand contact to Zn(2+).

Belongs to the metallo-dependent hydrolases superfamily. Adenosine and AMP deaminases family. As to quaternary structure, monomer. The cofactor is Zn(2+).

The catalysed reaction is N(6)-methyl-AMP + H2O + H(+) = IMP + methylamine. Functionally, catalyzes the hydrolysis of the free cytosolic methylated adenosine nucleotide N(6)-methyl-AMP (N6-mAMP) to produce inositol monophosphate (IMP) and methylamine. Is required for the catabolism of cytosolic N6-mAMP, which is derived from the degradation of mRNA containing N6-methylated adenine (m6A). Catalyzes the removal of different alkyl groups not only from N6-substituted purine or 2-aminopurine nucleoside monophosphates but also from O6-substituted compounds in vitro. The sequence is that of N6-Methyl-AMP deaminase from Homo sapiens (Human).